The primary structure comprises 156 residues: MPRKGYTKRQEILPDPIYNSKLVSRLINKLMLDGKRGTASTILYDAFDRIKEATGNDPLEVFEQAMENIMPVLEVKARRVGGSNYQVPIEVRPDRRSTLGLRWLVNYSRLRNEHTMDERLAKEIMDAANDTGASVKKREDTHKMAEANRAFAHYRW.

The protein belongs to the universal ribosomal protein uS7 family. As to quaternary structure, part of the 30S ribosomal subunit. Contacts proteins S9 and S11.

Its function is as follows. One of the primary rRNA binding proteins, it binds directly to 16S rRNA where it nucleates assembly of the head domain of the 30S subunit. Is located at the subunit interface close to the decoding center, probably blocks exit of the E-site tRNA. The protein is Small ribosomal subunit protein uS7 of Leuconostoc mesenteroides subsp. mesenteroides (strain ATCC 8293 / DSM 20343 / BCRC 11652 / CCM 1803 / JCM 6124 / NCDO 523 / NBRC 100496 / NCIMB 8023 / NCTC 12954 / NRRL B-1118 / 37Y).